The chain runs to 130 residues: MIGEWNNGTGRRKSSVARVFLKKGTGKITVNGKDIQEFFGRETSIMIAKQPLVLTNNLEAFDVMVNVNGGGESGQAGATRHGITRALIDYDASLKPVLSQAGYVTRDAREVERKKVGLHSARRRKQFSKR.

Belongs to the universal ribosomal protein uS9 family.

In Variovorax paradoxus (strain S110), this protein is Small ribosomal subunit protein uS9.